We begin with the raw amino-acid sequence, 303 residues long: Mycothiol acetyltransferase (303 aa).

Residue Asp33 participates in 1D-myo-inositol 2-(L-cysteinylamino)-2-deoxy-alpha-D-glucopyranoside binding. Residues 78 to 80 (VVV) and 86 to 91 (RRGTGS) each bind acetyl-CoA. In terms of domain architecture, N-acetyltransferase spans 150–303 (VRFATYSGPH…AYAAVAPTDV (154 aa)). The 1D-myo-inositol 2-(L-cysteinylamino)-2-deoxy-alpha-D-glucopyranoside site is built by Glu177, Lys218, and Glu226. 230-232 (VGV) contributes to the acetyl-CoA binding site. Tyr269 is a 1D-myo-inositol 2-(L-cysteinylamino)-2-deoxy-alpha-D-glucopyranoside binding site. Position 274-279 (274-279 (NTAAVK)) interacts with acetyl-CoA.

The protein belongs to the acetyltransferase family. MshD subfamily. Monomer.

It catalyses the reaction 1D-myo-inositol 2-(L-cysteinylamino)-2-deoxy-alpha-D-glucopyranoside + acetyl-CoA = mycothiol + CoA + H(+). Functionally, catalyzes the transfer of acetyl from acetyl-CoA to desacetylmycothiol (Cys-GlcN-Ins) to form mycothiol. The protein is Mycothiol acetyltransferase of Mycolicibacterium gilvum (strain PYR-GCK) (Mycobacterium gilvum (strain PYR-GCK)).